The following is a 291-amino-acid chain: 4-diphosphocytidyl-2-C-methyl-D-erythritol kinase (291 aa).

Lys10 is an active-site residue. 94–104 (PVSAGLAGGSS) lines the ATP pocket. Residue Asp136 is part of the active site.

This sequence belongs to the GHMP kinase family. IspE subfamily.

The catalysed reaction is 4-CDP-2-C-methyl-D-erythritol + ATP = 4-CDP-2-C-methyl-D-erythritol 2-phosphate + ADP + H(+). The protein operates within isoprenoid biosynthesis; isopentenyl diphosphate biosynthesis via DXP pathway; isopentenyl diphosphate from 1-deoxy-D-xylulose 5-phosphate: step 3/6. Its function is as follows. Catalyzes the phosphorylation of the position 2 hydroxy group of 4-diphosphocytidyl-2C-methyl-D-erythritol. The polypeptide is 4-diphosphocytidyl-2-C-methyl-D-erythritol kinase (Listeria innocua serovar 6a (strain ATCC BAA-680 / CLIP 11262)).